The sequence spans 653 residues: Macrolide export ATP-binding/permease protein MacB (653 aa).

Positions 6–244 constitute an ABC transporter domain; it reads LQLTRVTRRF…DAASGASGDA (239 aa). ATP is bound at residue 42–49; the sequence is GASGSGKS. A run of 4 helical transmembrane segments spans residues 278 to 298, 526 to 546, 587 to 607, and 616 to 636; these read LLTM…VAIG, LTLL…IGVM, MGGA…SLFV, and AGSI…FGFM.

The protein belongs to the ABC transporter superfamily. Macrolide exporter (TC 3.A.1.122) family. In terms of assembly, homodimer.

Its subcellular location is the cell inner membrane. Functionally, non-canonical ABC transporter that contains transmembrane domains (TMD), which form a pore in the inner membrane, and an ATP-binding domain (NBD), which is responsible for energy generation. Confers resistance against macrolides. The protein is Macrolide export ATP-binding/permease protein MacB of Burkholderia thailandensis (strain ATCC 700388 / DSM 13276 / CCUG 48851 / CIP 106301 / E264).